The chain runs to 555 residues: Benzoyl-CoA-dihydrodiol lyase (555 aa).

This sequence belongs to the benzoyl-CoA oxygenase component C family. Homodimer.

It catalyses the reaction 2,3-epoxy-2,3-dihydrobenzoyl-CoA + 2 H2O = (3Z)-6-oxohex-3-enoyl-CoA + formate + H(+). Its function is as follows. Catalyzes the ring opening of 2,3-epoxy-2,3-dihydroxybenzoyl-CoA to form 3,4-didehydroadipyl-CoA semialdehyde. This is Benzoyl-CoA-dihydrodiol lyase (boxC) from Aromatoleum evansii (Azoarcus evansii).